Here is a 122-residue protein sequence, read N- to C-terminus: Large ribosomal subunit protein uL14 (122 aa).

This sequence belongs to the universal ribosomal protein uL14 family. In terms of assembly, part of the 50S ribosomal subunit. Forms a cluster with proteins L3 and L19. In the 70S ribosome, L14 and L19 interact and together make contacts with the 16S rRNA in bridges B5 and B8.

Binds to 23S rRNA. Forms part of two intersubunit bridges in the 70S ribosome. The protein is Large ribosomal subunit protein uL14 of Acaryochloris marina (strain MBIC 11017).